Consider the following 357-residue polypeptide: Fructose-1,6-bisphosphatase class 1 2 (357 aa).

Mg(2+)-binding residues include Glu90, Asp112, Leu114, and Asp115. Residues 115–118 and Asn206 contribute to the substrate site; that span reads DGSS. Glu278 is a Mg(2+) binding site.

Belongs to the FBPase class 1 family. Homotetramer. Mg(2+) is required as a cofactor.

The protein localises to the cytoplasm. It carries out the reaction beta-D-fructose 1,6-bisphosphate + H2O = beta-D-fructose 6-phosphate + phosphate. It participates in carbohydrate biosynthesis; gluconeogenesis. This chain is Fructose-1,6-bisphosphatase class 1 2, found in Dechloromonas aromatica (strain RCB).